A 456-amino-acid chain; its full sequence is Bifunctional protein GlmU (456 aa).

Residues 1-228 (MPQNTLNTVI…SHLAAGVNNK (228 aa)) are pyrophosphorylase. Residues 11-14 (LAAG), Lys25, Gln75, 80-81 (GT), 102-104 (YGD), Gly138, Glu153, Asn168, and Asn226 each bind UDP-N-acetyl-alpha-D-glucosamine. Residue Asp104 participates in Mg(2+) binding. A Mg(2+)-binding site is contributed by Asn226. The tract at residues 229 to 249 (RQLAELERIFQTEQAQELLKA) is linker. Residues 250 to 456 (GVTLRDPARF…GWMRPEKDKQ (207 aa)) form an N-acetyltransferase region. Residues Arg332 and Lys350 each coordinate UDP-N-acetyl-alpha-D-glucosamine. His362 functions as the Proton acceptor in the catalytic mechanism. 2 residues coordinate UDP-N-acetyl-alpha-D-glucosamine: Tyr365 and Asn376. Acetyl-CoA is bound by residues Ala379, 385–386 (NY), Ser404, Ala422, and Arg439.

It in the N-terminal section; belongs to the N-acetylglucosamine-1-phosphate uridyltransferase family. This sequence in the C-terminal section; belongs to the transferase hexapeptide repeat family. In terms of assembly, homotrimer. It depends on Mg(2+) as a cofactor.

The protein localises to the cytoplasm. It carries out the reaction alpha-D-glucosamine 1-phosphate + acetyl-CoA = N-acetyl-alpha-D-glucosamine 1-phosphate + CoA + H(+). It catalyses the reaction N-acetyl-alpha-D-glucosamine 1-phosphate + UTP + H(+) = UDP-N-acetyl-alpha-D-glucosamine + diphosphate. The protein operates within nucleotide-sugar biosynthesis; UDP-N-acetyl-alpha-D-glucosamine biosynthesis; N-acetyl-alpha-D-glucosamine 1-phosphate from alpha-D-glucosamine 6-phosphate (route II): step 2/2. It participates in nucleotide-sugar biosynthesis; UDP-N-acetyl-alpha-D-glucosamine biosynthesis; UDP-N-acetyl-alpha-D-glucosamine from N-acetyl-alpha-D-glucosamine 1-phosphate: step 1/1. It functions in the pathway bacterial outer membrane biogenesis; LPS lipid A biosynthesis. Its function is as follows. Catalyzes the last two sequential reactions in the de novo biosynthetic pathway for UDP-N-acetylglucosamine (UDP-GlcNAc). The C-terminal domain catalyzes the transfer of acetyl group from acetyl coenzyme A to glucosamine-1-phosphate (GlcN-1-P) to produce N-acetylglucosamine-1-phosphate (GlcNAc-1-P), which is converted into UDP-GlcNAc by the transfer of uridine 5-monophosphate (from uridine 5-triphosphate), a reaction catalyzed by the N-terminal domain. The sequence is that of Bifunctional protein GlmU from Neisseria gonorrhoeae (strain ATCC 700825 / FA 1090).